A 128-amino-acid polypeptide reads, in one-letter code: Ribonuclease P protein component (128 aa).

Belongs to the RnpA family. Consists of a catalytic RNA component (M1 or rnpB) and a protein subunit.

The enzyme catalyses Endonucleolytic cleavage of RNA, removing 5'-extranucleotides from tRNA precursor.. Its function is as follows. RNaseP catalyzes the removal of the 5'-leader sequence from pre-tRNA to produce the mature 5'-terminus. It can also cleave other RNA substrates such as 4.5S RNA. The protein component plays an auxiliary but essential role in vivo by binding to the 5'-leader sequence and broadening the substrate specificity of the ribozyme. This is Ribonuclease P protein component from Prochlorococcus marinus (strain AS9601).